We begin with the raw amino-acid sequence, 271 residues long: ATP synthase subunit a (271 aa).

The next 5 helical transmembrane spans lie at 38 to 58 (FWTL…LFLA), 100 to 120 (LIAP…LMDL), 146 to 166 (DVNI…FYSI), 220 to 240 (LIFI…LNVP), and 242 to 262 (AIFH…LTIV).

This sequence belongs to the ATPase A chain family. F-type ATPases have 2 components, CF(1) - the catalytic core - and CF(0) - the membrane proton channel. CF(1) has five subunits: alpha(3), beta(3), gamma(1), delta(1), epsilon(1). CF(0) has three main subunits: a(1), b(2) and c(9-12). The alpha and beta chains form an alternating ring which encloses part of the gamma chain. CF(1) is attached to CF(0) by a central stalk formed by the gamma and epsilon chains, while a peripheral stalk is formed by the delta and b chains.

It localises to the cell inner membrane. Functionally, key component of the proton channel; it plays a direct role in the translocation of protons across the membrane. This chain is ATP synthase subunit a, found in Enterobacter sp. (strain 638).